A 361-amino-acid polypeptide reads, in one-letter code: Phospho-N-acetylmuramoyl-pentapeptide-transferase (361 aa).

Transmembrane regions (helical) follow at residues 28–48 (LAII…IEFL), 74–94 (TMGG…LADL), 99–119 (IWIT…DDYA), 133–153 (SKLL…EYLD), 168–188 (LSLD…VGSS), 203–223 (VPIA…GNLI), 236–256 (TGEL…FLWF), 263–283 (VFMG…ISVI), 288–308 (IVLA…ILQV), and 338–358 (KVVI…LSSL).

It belongs to the glycosyltransferase 4 family. MraY subfamily. Mg(2+) serves as cofactor.

The protein resides in the cell inner membrane. The catalysed reaction is UDP-N-acetyl-alpha-D-muramoyl-L-alanyl-gamma-D-glutamyl-meso-2,6-diaminopimeloyl-D-alanyl-D-alanine + di-trans,octa-cis-undecaprenyl phosphate = di-trans,octa-cis-undecaprenyl diphospho-N-acetyl-alpha-D-muramoyl-L-alanyl-D-glutamyl-meso-2,6-diaminopimeloyl-D-alanyl-D-alanine + UMP. Its pathway is cell wall biogenesis; peptidoglycan biosynthesis. In terms of biological role, catalyzes the initial step of the lipid cycle reactions in the biosynthesis of the cell wall peptidoglycan: transfers peptidoglycan precursor phospho-MurNAc-pentapeptide from UDP-MurNAc-pentapeptide onto the lipid carrier undecaprenyl phosphate, yielding undecaprenyl-pyrophosphoryl-MurNAc-pentapeptide, known as lipid I. The protein is Phospho-N-acetylmuramoyl-pentapeptide-transferase of Rickettsia africae (strain ESF-5).